Here is a 389-residue protein sequence, read N- to C-terminus: NADH-quinone oxidoreductase subunit D (389 aa).

The protein belongs to the complex I 49 kDa subunit family. NDH-1 is composed of 14 different subunits. Subunits NuoB, C, D, E, F, and G constitute the peripheral sector of the complex.

The protein resides in the cell inner membrane. It carries out the reaction a quinone + NADH + 5 H(+)(in) = a quinol + NAD(+) + 4 H(+)(out). In terms of biological role, NDH-1 shuttles electrons from NADH, via FMN and iron-sulfur (Fe-S) centers, to quinones in the respiratory chain. The immediate electron acceptor for the enzyme in this species is believed to be ubiquinone. Couples the redox reaction to proton translocation (for every two electrons transferred, four hydrogen ions are translocated across the cytoplasmic membrane), and thus conserves the redox energy in a proton gradient. This Rickettsia typhi (strain ATCC VR-144 / Wilmington) protein is NADH-quinone oxidoreductase subunit D.